A 117-amino-acid polypeptide reads, in one-letter code: Minor capsid protein VP2 (117 aa).

The protein belongs to the lagovirus VP2 protein family. As to quaternary structure, homooligomer. The portal-like structure consists in 12 copies of VP2. Interacts with capsid protein VP1.

The protein localises to the virion. It is found in the host cytoplasm. Its function is as follows. Minor structural protein that forms a portal-like structure at a unique three-fold axis of symmetry, following binding to the host receptor. The channel formed by VP2 may allow the delivery of the viral genome through the host endosomal membrane. The protein is Minor capsid protein VP2 of Rabbit hemorrhagic disease virus (strain AST89) (Ra/LV/RHDV/AST89/1989/SP).